The sequence spans 261 residues: Tryptophan synthase alpha chain (261 aa).

Active-site proton acceptor residues include Glu47 and Asp58.

This sequence belongs to the TrpA family. Tetramer of two alpha and two beta chains.

It catalyses the reaction (1S,2R)-1-C-(indol-3-yl)glycerol 3-phosphate + L-serine = D-glyceraldehyde 3-phosphate + L-tryptophan + H2O. It functions in the pathway amino-acid biosynthesis; L-tryptophan biosynthesis; L-tryptophan from chorismate: step 5/5. Functionally, the alpha subunit is responsible for the aldol cleavage of indoleglycerol phosphate to indole and glyceraldehyde 3-phosphate. This is Tryptophan synthase alpha chain from Neisseria meningitidis serogroup A / serotype 4A (strain DSM 15465 / Z2491).